The primary structure comprises 335 residues: Eukaryotic translation initiation factor 3 subunit I (335 aa).

WD repeat units follow at residues 8 to 47 (GHER…RLGT), 50 to 91 (GHQG…KTWD), 145 to 184 (CAES…LLFN), 189 to 228 (EPDL…VMKT), and 286 to 325 (GHFG…FDFT).

The protein belongs to the eIF-3 subunit I family. Component of the eukaryotic translation initiation factor 3 (eIF-3) complex.

It is found in the cytoplasm. Functionally, component of the eukaryotic translation initiation factor 3 (eIF-3) complex, which is involved in protein synthesis of a specialized repertoire of mRNAs and, together with other initiation factors, stimulates binding of mRNA and methionyl-tRNAi to the 40S ribosome. The eIF-3 complex specifically targets and initiates translation of a subset of mRNAs involved in cell proliferation. The protein is Eukaryotic translation initiation factor 3 subunit I (tif34) of Sclerotinia sclerotiorum (strain ATCC 18683 / 1980 / Ss-1) (White mold).